We begin with the raw amino-acid sequence, 276 residues long: Phosphatidylglycerol--prolipoprotein diacylglyceryl transferase (276 aa).

Helical transmembrane passes span 17-37 (FGPF…VLGW), 59-79 (FLSW…ILFY), 94-114 (VWDG…AILI), 132-152 (VPVP…GELW), 177-197 (PSEL…LLIA), 208-225 (GYLG…RTTA), and 235-255 (LGYL…MIVI). Residue Arg-142 participates in a 1,2-diacyl-sn-glycero-3-phospho-(1'-sn-glycerol) binding.

Belongs to the Lgt family.

The protein localises to the cell inner membrane. It catalyses the reaction L-cysteinyl-[prolipoprotein] + a 1,2-diacyl-sn-glycero-3-phospho-(1'-sn-glycerol) = an S-1,2-diacyl-sn-glyceryl-L-cysteinyl-[prolipoprotein] + sn-glycerol 1-phosphate + H(+). Its pathway is protein modification; lipoprotein biosynthesis (diacylglyceryl transfer). Its function is as follows. Catalyzes the transfer of the diacylglyceryl group from phosphatidylglycerol to the sulfhydryl group of the N-terminal cysteine of a prolipoprotein, the first step in the formation of mature lipoproteins. This chain is Phosphatidylglycerol--prolipoprotein diacylglyceryl transferase, found in Acidiphilium cryptum (strain JF-5).